An 857-amino-acid chain; its full sequence is DNA mismatch repair protein MutS (857 aa).

613-620 (GPNMGGKS) is a binding site for ATP. Residues 797-820 (TSLPHEQPAAHKAKDAPQVPHQSD) are disordered.

Belongs to the DNA mismatch repair MutS family.

Its function is as follows. This protein is involved in the repair of mismatches in DNA. It is possible that it carries out the mismatch recognition step. This protein has a weak ATPase activity. The polypeptide is DNA mismatch repair protein MutS (Pseudomonas putida (strain ATCC 700007 / DSM 6899 / JCM 31910 / BCRC 17059 / LMG 24140 / F1)).